Reading from the N-terminus, the 569-residue chain is Phenylalanine ammonia-lyase (569 aa).

Residue Y78 is the Proton donor/acceptor of the active site. Residues 167–169 constitute a cross-link (5-imidazolinone (Ala-Gly)); it reads ASG. Residue S168 is modified to 2,3-didehydroalanine (Ser). (E)-cinnamate-binding residues include N223, Q311, R317, N347, K419, E448, and N451.

This sequence belongs to the PAL/histidase family. Homotetramer. Post-translationally, contains an active site 4-methylidene-imidazol-5-one (MIO), which is formed autocatalytically by cyclization and dehydration of residues Ala-Ser-Gly.

The protein localises to the cytoplasm. It catalyses the reaction L-phenylalanine = (E)-cinnamate + NH4(+). It participates in phenylpropanoid metabolism; trans-cinnamate biosynthesis; trans-cinnamate from L-phenylalanine: step 1/1. Its function is as follows. Catalyzes the non-oxidative deamination of L-phenylalanine to form trans-cinnamic acid, the first step in the phenylpropanoid pathway. The sequence is that of Phenylalanine ammonia-lyase from Nostoc punctiforme (strain ATCC 29133 / PCC 73102).